The sequence spans 392 residues: Leucine aminopeptidase 1 (392 aa).

The first 18 residues, 1–18 (MKFSQASLLAACLPAISA), serve as a signal peptide directing secretion. The propeptide occupies 19–82 (RFIETAEADN…LGSTRLNAQT (64 aa)). N-linked (GlcNAc...) asparagine glycosylation is present at Asn174. 4 residues coordinate Zn(2+): His182, Asp201, Glu240, and Asp267. An intrachain disulfide couples Cys316 to Cys320. His349 contacts Zn(2+).

The protein belongs to the peptidase M28 family. M28E subfamily. Monomer. Requires Zn(2+) as cofactor.

It localises to the secreted. Extracellular aminopeptidase that allows assimilation of proteinaceous substrates. The polypeptide is Leucine aminopeptidase 1 (LAP1) (Fusarium vanettenii (strain ATCC MYA-4622 / CBS 123669 / FGSC 9596 / NRRL 45880 / 77-13-4) (Fusarium solani subsp. pisi)).